Consider the following 93-residue polypeptide: DNA-binding protein HB1 (93 aa).

The protein belongs to the bacterial histone-like protein family. Homodimer.

Histone-like DNA-binding protein which is capable of wrapping DNA to stabilize it, and thus to prevent its denaturation under extreme environmental conditions. This Bifidobacterium longum (strain NCC 2705) protein is DNA-binding protein HB1 (hup).